Here is a 237-residue protein sequence, read N- to C-terminus: Undecaprenyl-diphosphatase (237 aa).

Transmembrane regions (helical) follow at residues glutamine 38–isoleucine 58, tryptophan 65–phenylalanine 85, leucine 92–phenylalanine 112, methionine 126–isoleucine 146, alanine 166–leucine 186, valine 191–serine 211, and glycine 217–glycine 237.

The protein belongs to the UppP family.

It is found in the cell inner membrane. It catalyses the reaction di-trans,octa-cis-undecaprenyl diphosphate + H2O = di-trans,octa-cis-undecaprenyl phosphate + phosphate + H(+). In terms of biological role, catalyzes the dephosphorylation of undecaprenyl diphosphate (UPP). Confers resistance to bacitracin. The protein is Undecaprenyl-diphosphatase of Thermotoga maritima (strain ATCC 43589 / DSM 3109 / JCM 10099 / NBRC 100826 / MSB8).